The chain runs to 389 residues: Ribonucleoside-diphosphate reductase subunit M2 (389 aa).

S20 bears the Phosphoserine mark. At T33 the chain carries Phosphothreonine. Residues 49 to 51 carry the Cy motif; the sequence is RRI. Positions 138, 169, and 172 each coordinate Fe cation. Y176 is an active-site residue. Positions 232, 266, and 269 each coordinate Fe cation.

The protein belongs to the ribonucleoside diphosphate reductase small chain family. In terms of assembly, heterodimer of a large and a small subunit. Interacts (via Cy motif and when phosphorylated at Thr-33) with CCNF; the interaction occurs exclusively in G2 and early M. Fe cation serves as cofactor. Phosphorylation on Ser-20 relieves the inhibitory effect on Wnt signaling. Phosphorylated on Thr-33 by CDK1 and CDK2; predominantly in G2 and M phase. In terms of processing, ubiquitinated by the SCF(CCNF) E3 ubiquitin-protein ligase complex; leading to its degradation by the proteasome.

The protein resides in the cytoplasm. It localises to the nucleus. It carries out the reaction a 2'-deoxyribonucleoside 5'-diphosphate + [thioredoxin]-disulfide + H2O = a ribonucleoside 5'-diphosphate + [thioredoxin]-dithiol. Provides the precursors necessary for DNA synthesis. Catalyzes the biosynthesis of deoxyribonucleotides from the corresponding ribonucleotides. Inhibits Wnt signaling. The chain is Ribonucleoside-diphosphate reductase subunit M2 (RRM2) from Homo sapiens (Human).